A 459-amino-acid polypeptide reads, in one-letter code: Exodeoxyribonuclease 7 large subunit (459 aa).

Belongs to the XseA family. In terms of assembly, heterooligomer composed of large and small subunits.

The protein resides in the cytoplasm. It carries out the reaction Exonucleolytic cleavage in either 5'- to 3'- or 3'- to 5'-direction to yield nucleoside 5'-phosphates.. Functionally, bidirectionally degrades single-stranded DNA into large acid-insoluble oligonucleotides, which are then degraded further into small acid-soluble oligonucleotides. In Pseudomonas entomophila (strain L48), this protein is Exodeoxyribonuclease 7 large subunit.